A 62-amino-acid polypeptide reads, in one-letter code: Metallothionein-like protein 3A (62 aa).

Belongs to the metallothionein superfamily. Type 15 family.

Its function is as follows. Metallothioneins have a high content of cysteine residues that bind various heavy metals. The polypeptide is Metallothionein-like protein 3A (MT3A) (Oryza sativa subsp. indica (Rice)).